Reading from the N-terminus, the 91-residue chain is Uteroglobin (91 aa).

The N-terminal stretch at Met-1–Thr-21 is a signal peptide.

Belongs to the secretoglobin family. In terms of assembly, antiparallel homodimer; disulfide-linked. Interaction with LMBR1L is controversial.

Its subcellular location is the secreted. Its function is as follows. Binds phosphatidylcholine, phosphatidylinositol, polychlorinated biphenyls (PCB) and weakly progesterone, potent inhibitor of phospholipase A2. The polypeptide is Uteroglobin (SCGB1A1) (Bos taurus (Bovine)).